We begin with the raw amino-acid sequence, 202 residues long: Large ribosomal subunit protein uL4 (202 aa).

Positions 45 to 71 (HAQKNRSEVSGSGKKPWRQKGTGRARV) are disordered.

The protein belongs to the universal ribosomal protein uL4 family. As to quaternary structure, part of the 50S ribosomal subunit.

Functionally, one of the primary rRNA binding proteins, this protein initially binds near the 5'-end of the 23S rRNA. It is important during the early stages of 50S assembly. It makes multiple contacts with different domains of the 23S rRNA in the assembled 50S subunit and ribosome. Its function is as follows. Forms part of the polypeptide exit tunnel. In Buchnera aphidicola subsp. Baizongia pistaciae (strain Bp), this protein is Large ribosomal subunit protein uL4.